Reading from the N-terminus, the 335-residue chain is Protein-arginine kinase (335 aa).

The 224-residue stretch at 21–244 folds into the Phosphagen kinase C-terminal domain; that stretch reads IVMSSRIRLA…NQIIHEEKQI (224 aa). Residues 24–28, His82, Arg115, 166–170, and 197–202 each bind ATP; these read SSRIR, RASVM, and RGIYGE.

This sequence belongs to the ATP:guanido phosphotransferase family.

The catalysed reaction is L-arginyl-[protein] + ATP = N(omega)-phospho-L-arginyl-[protein] + ADP + H(+). Its function is as follows. Catalyzes the specific phosphorylation of arginine residues in proteins. The chain is Protein-arginine kinase from Staphylococcus aureus (strain USA300).